The primary structure comprises 391 residues: NADH-quinone oxidoreductase subunit D (391 aa).

This sequence belongs to the complex I 49 kDa subunit family. NDH-1 is composed of 14 different subunits. Subunits NuoB, C, D, E, F, and G constitute the peripheral sector of the complex.

The protein localises to the cell inner membrane. The catalysed reaction is a quinone + NADH + 5 H(+)(in) = a quinol + NAD(+) + 4 H(+)(out). Its function is as follows. NDH-1 shuttles electrons from NADH, via FMN and iron-sulfur (Fe-S) centers, to quinones in the respiratory chain. The immediate electron acceptor for the enzyme in this species is believed to be ubiquinone. Couples the redox reaction to proton translocation (for every two electrons transferred, four hydrogen ions are translocated across the cytoplasmic membrane), and thus conserves the redox energy in a proton gradient. The chain is NADH-quinone oxidoreductase subunit D from Rickettsia rickettsii (strain Sheila Smith).